Here is a 249-residue protein sequence, read N- to C-terminus: Methyl-coenzyme M reductase subunit gamma (249 aa).

Residues 43–62 (RAPGEEYPSVHPPLEELDEP) form a disordered region. Arginine 120 is a binding site for coenzyme M.

The protein belongs to the methyl-coenzyme M reductase gamma subunit family. In terms of assembly, MCR is a hexamer of two alpha, two beta, and two gamma chains, forming a dimer of heterotrimers. Requires coenzyme F430 as cofactor.

The protein resides in the cytoplasm. It catalyses the reaction coenzyme B + methyl-coenzyme M = methane + coenzyme M-coenzyme B heterodisulfide. It functions in the pathway one-carbon metabolism; methyl-coenzyme M reduction; methane from methyl-coenzyme M: step 1/1. Component of the methyl-coenzyme M reductase (MCR) I that catalyzes the reductive cleavage of methyl-coenzyme M (CoM-S-CH3 or 2-(methylthio)ethanesulfonate) using coenzyme B (CoB or 7-mercaptoheptanoylthreonine phosphate) as reductant which results in the production of methane and the mixed heterodisulfide of CoB and CoM (CoM-S-S-CoB). This is the final step in methanogenesis. The chain is Methyl-coenzyme M reductase subunit gamma (mcrG) from Methanothermus fervidus.